Consider the following 183-residue polypeptide: Acireductone dioxygenase (183 aa).

Positions 95, 97, 101, and 139 each coordinate Fe(2+). The Ni(2+) site is built by histidine 95, histidine 97, glutamate 101, and histidine 139.

This sequence belongs to the acireductone dioxygenase (ARD) family. Monomer. Fe(2+) is required as a cofactor. The cofactor is Ni(2+).

It catalyses the reaction 1,2-dihydroxy-5-(methylsulfanyl)pent-1-en-3-one + O2 = 3-(methylsulfanyl)propanoate + CO + formate + 2 H(+). The catalysed reaction is 1,2-dihydroxy-5-(methylsulfanyl)pent-1-en-3-one + O2 = 4-methylsulfanyl-2-oxobutanoate + formate + 2 H(+). It participates in amino-acid biosynthesis; L-methionine biosynthesis via salvage pathway; L-methionine from S-methyl-5-thio-alpha-D-ribose 1-phosphate: step 5/6. Its function is as follows. Catalyzes 2 different reactions between oxygen and the acireductone 1,2-dihydroxy-3-keto-5-methylthiopentene (DHK-MTPene) depending upon the metal bound in the active site. Fe-containing acireductone dioxygenase (Fe-ARD) produces formate and 2-keto-4-methylthiobutyrate (KMTB), the alpha-ketoacid precursor of methionine in the methionine recycle pathway. Ni-containing acireductone dioxygenase (Ni-ARD) produces methylthiopropionate, carbon monoxide and formate, and does not lie on the methionine recycle pathway. The sequence is that of Acireductone dioxygenase from Aquifex aeolicus (strain VF5).